A 341-amino-acid polypeptide reads, in one-letter code: Zinc finger protein ZIC 4 (341 aa).

The disordered stretch occupies residues 36 to 66 (HHGPQLAASSNPSVLPGLHEQPPQASHSRPL). A C2H2-type 1; atypical zinc finger spans residues 135 to 169 (LICKWLGDDSPMSPRPCSKTFSTMHELVTHVTVEH). The C2H2-type 2; atypical zinc-finger motif lies at 178–205 (HICFWEECPRQGKPFKAKYKLVNHIRVH). 3 consecutive C2H2-type zinc fingers follow at residues 211–235 (FPCP…KRTH), 241–265 (FRCE…SHVH), and 271–295 (YMCK…MKVH). The interval 289-309 (RKHMKVHGRSPPPSSGYDSAI) is disordered.

It belongs to the GLI C2H2-type zinc-finger protein family. Exclusively expressed in the cerebellum.

It localises to the nucleus. Binds to DNA. This chain is Zinc finger protein ZIC 4 (Zic4), found in Mus musculus (Mouse).